The primary structure comprises 115 residues: Non-specific lipid-transfer protein (115 aa).

The N-terminal stretch at 1 to 24 (MASSAVIKLALVVALCMAVSVAHA) is a signal peptide. 4 disulfide bridges follow: Cys-27–Cys-74, Cys-37–Cys-51, Cys-52–Cys-97, and Cys-72–Cys-111.

Belongs to the plant LTP family.

Functionally, plant non-specific lipid-transfer proteins transfer phospholipids as well as galactolipids across membranes. May play a role in wax or cutin deposition in the cell walls of expanding epidermal cells and certain secretory tissues. In Pyrus communis (Pear), this protein is Non-specific lipid-transfer protein.